The following is a 290-amino-acid chain: uncharacterized protein (290 aa).

The Schiff-base intermediate with substrate role is filled by Lys203.

Belongs to the DeoC/FbaB aldolase family.

This is an uncharacterized protein from Pasteurella multocida (strain Pm70).